The sequence spans 91 residues: Small ribosomal subunit protein uS19 (91 aa).

The protein belongs to the universal ribosomal protein uS19 family.

Its function is as follows. Protein S19 forms a complex with S13 that binds strongly to the 16S ribosomal RNA. The sequence is that of Small ribosomal subunit protein uS19 from Azotobacter vinelandii (strain DJ / ATCC BAA-1303).